We begin with the raw amino-acid sequence, 430 residues long: Histidine--tRNA ligase (430 aa).

The protein belongs to the class-II aminoacyl-tRNA synthetase family. As to quaternary structure, homodimer.

The protein localises to the cytoplasm. It carries out the reaction tRNA(His) + L-histidine + ATP = L-histidyl-tRNA(His) + AMP + diphosphate + H(+). The protein is Histidine--tRNA ligase of Acinetobacter baumannii (strain ATCC 17978 / DSM 105126 / CIP 53.77 / LMG 1025 / NCDC KC755 / 5377).